The sequence spans 295 residues: UDP-N-acetylenolpyruvoylglucosamine reductase (295 aa).

The FAD-binding PCMH-type domain maps to 23-188 (KVGGPADFLA…ISAKFALKPG (166 aa)). The active site involves Arg167. The Proton donor role is filled by Ser217. Glu287 is a catalytic residue.

It belongs to the MurB family. FAD is required as a cofactor.

It is found in the cytoplasm. It carries out the reaction UDP-N-acetyl-alpha-D-muramate + NADP(+) = UDP-N-acetyl-3-O-(1-carboxyvinyl)-alpha-D-glucosamine + NADPH + H(+). It functions in the pathway cell wall biogenesis; peptidoglycan biosynthesis. Functionally, cell wall formation. The sequence is that of UDP-N-acetylenolpyruvoylglucosamine reductase from Streptococcus pyogenes serotype M18 (strain MGAS8232).